The sequence spans 291 residues: Formamidopyrimidine-DNA glycosylase (291 aa).

Residue Pro-2 is the Schiff-base intermediate with DNA of the active site. Glu-3 acts as the Proton donor in catalysis. The Proton donor; for beta-elimination activity role is filled by Lys-58. DNA is bound by residues His-104, Arg-127, and Arg-172. The FPG-type zinc-finger motif lies at 257-291 (FVYDRAGLPCRACGTPIRQIVQGQRSTFCCPTCQR). Arg-281 serves as the catalytic Proton donor; for delta-elimination activity.

It belongs to the FPG family. Monomer. Zn(2+) serves as cofactor.

The catalysed reaction is Hydrolysis of DNA containing ring-opened 7-methylguanine residues, releasing 2,6-diamino-4-hydroxy-5-(N-methyl)formamidopyrimidine.. The enzyme catalyses 2'-deoxyribonucleotide-(2'-deoxyribose 5'-phosphate)-2'-deoxyribonucleotide-DNA = a 3'-end 2'-deoxyribonucleotide-(2,3-dehydro-2,3-deoxyribose 5'-phosphate)-DNA + a 5'-end 5'-phospho-2'-deoxyribonucleoside-DNA + H(+). Functionally, involved in base excision repair of DNA damaged by oxidation or by mutagenic agents. Acts as a DNA glycosylase that recognizes and removes damaged bases. Has a preference for oxidized purines, such as 7,8-dihydro-8-oxoguanine (8-oxoG). Has AP (apurinic/apyrimidinic) lyase activity and introduces nicks in the DNA strand. Cleaves the DNA backbone by beta-delta elimination to generate a single-strand break at the site of the removed base with both 3'- and 5'-phosphates. The chain is Formamidopyrimidine-DNA glycosylase from Ralstonia pickettii (strain 12J).